Reading from the N-terminus, the 244-residue chain is Precorrin-6A reductase (244 aa).

It belongs to the precorrin-6x reductase family.

The enzyme catalyses precorrin-6B + NADP(+) = precorrin-6A + NADPH + 2 H(+). It functions in the pathway cofactor biosynthesis; adenosylcobalamin biosynthesis; cob(II)yrinate a,c-diamide from precorrin-2 (aerobic route): step 6/10. Functionally, catalyzes the reduction of the macrocycle of precorrin-6X into precorrin-6Y. This is Precorrin-6A reductase (cobK) from Mycobacterium tuberculosis (strain CDC 1551 / Oshkosh).